The chain runs to 147 residues: Hemoglobin subunit delta (147 aa).

Positions 3-147 constitute a Globin domain; the sequence is HLTPEEKTAV…VANALAHKYH (145 aa). Position 51 is a phosphoserine (Ser-51). Residues His-64 and His-93 each coordinate heme b.

The protein belongs to the globin family. Heterotetramer of two delta chains and two alpha chains. Red blood cells.

The sequence is that of Hemoglobin subunit delta (HBD) from Gorilla gorilla gorilla (Western lowland gorilla).